We begin with the raw amino-acid sequence, 159 residues long: Ribose-5-phosphate isomerase B (159 aa).

D-ribulose 5-phosphate contacts are provided by residues 8–9 (DH) and 67–71 (GSGNG). The active-site Proton acceptor is Glu-72. The Proton donor role is filled by His-99. D-ribulose 5-phosphate contacts are provided by Asn-100, Arg-110, Arg-134, and Arg-138.

It belongs to the LacAB/RpiB family. In terms of assembly, homodimer.

It carries out the reaction aldehydo-D-ribose 5-phosphate = D-ribulose 5-phosphate. Its pathway is carbohydrate degradation; pentose phosphate pathway; D-ribose 5-phosphate from D-ribulose 5-phosphate (non-oxidative stage): step 1/1. Its function is as follows. Catalyzes the interconversion of ribulose-5-P and ribose-5-P. In Mycolicibacterium paratuberculosis (strain ATCC BAA-968 / K-10) (Mycobacterium paratuberculosis), this protein is Ribose-5-phosphate isomerase B.